Consider the following 645-residue polypeptide: MIKITLPDGSIREYEKGITSMGIALSISEGLARNVLAAKVNGEIWDASRAITSDSTVQLLTWNDTEGKSTFWHSSAHLLAEALEALYPGTKFGIGPAIETGFYYDVDFGDRAFSQDDFENIEKKVLELAKQKNAYIRKEISKKDAVAYFTDKQDPYKLDLLEGLSDGSITFYKQGAFTDLCRGPHIPDTGFIKAVKLMSVAGAYWRGDEKSKQLTRIYGVTFPKQQELKDYLTILEEAKKRDHRKLGKELELFAFSEKVGMGLPLWLPKGALLRERLENFLKKAQVRAGYQPVVTPHIGNKQLYVTSGHFDKYGKDSFQPIFTPHEGEQFLLKPMNCPHHCEIYKTKPRSYKDLPIRFAEFGTVYRYEQSGELHGLTRVRGFTQDDAHIFCRPDQVKEEFLKVIDLVLYVFKVLGFNDYTAQISLRDPENKDKYIGEDEQWQKAEQAIIEASAEKGLSTVTELGEAAFYGPKLDFMVKDALGRKWQLGTIQVDYQLPNRFELEYTGSDNQKHRPVMLHRAPFGSLERFIAVLIEHVAGNFPLWLSPDQIAILPISEKFNDYAQDVYDRLLVKDIRGFIDNRDEKIGKKIRDTEVKKVPFMLVIGEKEVNEGKIAIRKHGGEDLGSMLVEDFIQYFESEIAKQLAV.

In terms of domain architecture, TGS spans 1 to 61; the sequence is MIKITLPDGS…TSDSTVQLLT (61 aa). Residues 242 to 541 are catalytic; the sequence is DHRKLGKELE…LIEHVAGNFP (300 aa). The Zn(2+) site is built by Cys-337, His-388, and His-518.

This sequence belongs to the class-II aminoacyl-tRNA synthetase family. As to quaternary structure, homodimer. Requires Zn(2+) as cofactor.

The protein resides in the cytoplasm. It catalyses the reaction tRNA(Thr) + L-threonine + ATP = L-threonyl-tRNA(Thr) + AMP + diphosphate + H(+). Catalyzes the attachment of threonine to tRNA(Thr) in a two-step reaction: L-threonine is first activated by ATP to form Thr-AMP and then transferred to the acceptor end of tRNA(Thr). Also edits incorrectly charged L-seryl-tRNA(Thr). This Cytophaga hutchinsonii (strain ATCC 33406 / DSM 1761 / CIP 103989 / NBRC 15051 / NCIMB 9469 / D465) protein is Threonine--tRNA ligase.